The primary structure comprises 387 residues: 3-ketoacyl-CoA thiolase (387 aa).

Catalysis depends on C91, which acts as the Acyl-thioester intermediate. Active-site proton acceptor residues include H343 and C373.

It belongs to the thiolase-like superfamily. Thiolase family. In terms of assembly, heterotetramer of two alpha chains (FadB) and two beta chains (FadA).

The protein resides in the cytoplasm. The catalysed reaction is an acyl-CoA + acetyl-CoA = a 3-oxoacyl-CoA + CoA. Its pathway is lipid metabolism; fatty acid beta-oxidation. In terms of biological role, catalyzes the final step of fatty acid oxidation in which acetyl-CoA is released and the CoA ester of a fatty acid two carbons shorter is formed. The protein is 3-ketoacyl-CoA thiolase of Vibrio vulnificus (strain YJ016).